The primary structure comprises 207 residues: Large ribosomal subunit protein bL25 (207 aa).

Belongs to the bacterial ribosomal protein bL25 family. CTC subfamily. Part of the 50S ribosomal subunit; part of the 5S rRNA/L5/L18/L25 subcomplex. Contacts the 5S rRNA. Binds to the 5S rRNA independently of L5 and L18.

In terms of biological role, this is one of the proteins that binds to the 5S RNA in the ribosome where it forms part of the central protuberance. This is Large ribosomal subunit protein bL25 from Rhizorhabdus wittichii (strain DSM 6014 / CCUG 31198 / JCM 15750 / NBRC 105917 / EY 4224 / RW1) (Sphingomonas wittichii).